Consider the following 255-residue polypeptide: Hydroxyacylglutathione hydrolase (255 aa).

Positions 56, 58, 60, 61, 112, 129, and 167 each coordinate Zn(2+).

Belongs to the metallo-beta-lactamase superfamily. Glyoxalase II family. As to quaternary structure, monomer. It depends on Zn(2+) as a cofactor.

It catalyses the reaction an S-(2-hydroxyacyl)glutathione + H2O = a 2-hydroxy carboxylate + glutathione + H(+). It participates in secondary metabolite metabolism; methylglyoxal degradation; (R)-lactate from methylglyoxal: step 2/2. Thiolesterase that catalyzes the hydrolysis of S-D-lactoyl-glutathione to form glutathione and D-lactic acid. In Pseudomonas fluorescens (strain SBW25), this protein is Hydroxyacylglutathione hydrolase.